A 692-amino-acid chain; its full sequence is Elongation factor G (692 aa).

The 275-residue stretch at 8–282 (AKTRNIGIMA…AVIAYLPSPL (275 aa)) folds into the tr-type G domain. GTP-binding positions include 17 to 24 (AHVDAGKT), 81 to 85 (DTPGH), and 135 to 138 (NKMD).

It belongs to the TRAFAC class translation factor GTPase superfamily. Classic translation factor GTPase family. EF-G/EF-2 subfamily.

It is found in the cytoplasm. Functionally, catalyzes the GTP-dependent ribosomal translocation step during translation elongation. During this step, the ribosome changes from the pre-translocational (PRE) to the post-translocational (POST) state as the newly formed A-site-bound peptidyl-tRNA and P-site-bound deacylated tRNA move to the P and E sites, respectively. Catalyzes the coordinated movement of the two tRNA molecules, the mRNA and conformational changes in the ribosome. This chain is Elongation factor G, found in Streptococcus equi subsp. zooepidemicus (strain MGCS10565).